The sequence spans 100 residues: NADH-quinone oxidoreductase subunit K (100 aa).

3 helical membrane-spanning segments follow: residues 4-24 (LTHG…GLVI), 28-48 (LLFM…AFVV), and 60-80 (VMYI…LALL).

Belongs to the complex I subunit 4L family. In terms of assembly, NDH-1 is composed of 13 different subunits. Subunits NuoA, H, J, K, L, M, N constitute the membrane sector of the complex.

The protein localises to the cell inner membrane. The catalysed reaction is a quinone + NADH + 5 H(+)(in) = a quinol + NAD(+) + 4 H(+)(out). Functionally, NDH-1 shuttles electrons from NADH, via FMN and iron-sulfur (Fe-S) centers, to quinones in the respiratory chain. The immediate electron acceptor for the enzyme in this species is believed to be ubiquinone. Couples the redox reaction to proton translocation (for every two electrons transferred, four hydrogen ions are translocated across the cytoplasmic membrane), and thus conserves the redox energy in a proton gradient. In Enterobacter sp. (strain 638), this protein is NADH-quinone oxidoreductase subunit K.